The chain runs to 361 residues: Protein RecA (361 aa).

77–84 (GPESSGKT) is a binding site for ATP.

Belongs to the RecA family.

It is found in the cytoplasm. In terms of biological role, can catalyze the hydrolysis of ATP in the presence of single-stranded DNA, the ATP-dependent uptake of single-stranded DNA by duplex DNA, and the ATP-dependent hybridization of homologous single-stranded DNAs. It interacts with LexA causing its activation and leading to its autocatalytic cleavage. The polypeptide is Protein RecA (Brucella abortus (strain S19)).